Reading from the N-terminus, the 256-residue chain is Large ribosomal subunit protein bL28m (256 aa).

A mitochondrion-targeting transit peptide spans 1 to 55; sequence MPLHKVPVGLWKRLRLREGIYSRLPAHYLRSLEEARTPTPVHFRPHGAKFKINPK.

Belongs to the bacterial ribosomal protein bL28 family. As to quaternary structure, component of the mitochondrial ribosome large subunit (39S) which comprises a 16S rRNA and about 50 distinct proteins. Interacts with OXA1L.

It is found in the mitochondrion. In Bos taurus (Bovine), this protein is Large ribosomal subunit protein bL28m (MRPL28).